The sequence spans 783 residues: Cyclin-dependent kinase 11A (783 aa).

The segment covering 18-58 has biased composition (basic and acidic residues); sequence QEKKRRKEQEEKAEIKRLKNSDDRDSKRDSLEEGELRDHCM. The segment at 18–396 is disordered; that stretch reads QEKKRRKEQE…SALTEGDYVP (379 aa). A phosphoserine mark is found at Ser47 and Ser72. Basic residues predominate over residues 95-125; that stretch reads EKVHHRKDEKRKEKWKHARVKEREHERRKRH. Basic and acidic residues-rich tracts occupy residues 126 to 215, 226 to 241, and 252 to 264; these read REEQ…DKVK, PPRERFELGDGRKPGE, and QLKEEKMEERDLL. At Ser271 the chain carries Phosphoserine. Positions 279–290 are enriched in low complexity; sequence SAESSSAESGSG. 2 stretches are compositionally biased toward acidic residues: residues 291–352 and 371–380; these read SEEE…EERE and ESEEAEEEVG. Residues 427–647 form the Protein kinase domain; the sequence is QCLNRIEEGT…VFKELGTPSE (221 aa). ATP-binding positions include 432-440 and Lys455; that span reads IEEGTYGVV. Phosphoserine; by CDK7 is present on Ser470. A Phosphothreonine; by CDK7 modification is found at Thr476. Asp550 acts as the Proton acceptor in catalysis. The residue at position 577 (Ser577) is a Phosphoserine. The residue at position 582 (Tyr582) is a Phosphotyrosine. Phosphothreonine occurs at positions 583 and 739. The interval 721–783 is disordered; it reads SMFPTWPAKS…AAGPGFSLKF (63 aa). Ser740 is modified (phosphoserine).

Belongs to the protein kinase superfamily. CMGC Ser/Thr protein kinase family. CDC2/CDKX subfamily. In terms of assembly, the cleaved p110 isoform, p110C, binds to the serine/threonine kinase PAK1. The p58 isoform but not the p110 isoform or p110C interacts with CCND3. The p110 isoforms are found in large molecular weight complexes containing CCNL1 and SFRS7. Mg(2+) is required as a cofactor. In terms of processing, during apoptosis, induced by Fas or tumor necrosis factor, specific CKD11 p110 isoforms are cleaved by caspases to produce a protein (p110C) that contains the C-terminal kinase domain of the CDK11 proteins. In terms of tissue distribution, expressed ubiquitously. Some evidence of isoform-specific tissue distribution.

The protein localises to the cytoplasm. The protein resides in the nucleus. The catalysed reaction is L-seryl-[protein] + ATP = O-phospho-L-seryl-[protein] + ADP + H(+). The enzyme catalyses L-threonyl-[protein] + ATP = O-phospho-L-threonyl-[protein] + ADP + H(+). Its activity is regulated as follows. Phosphorylation at Thr-436 or Tyr-437 inactivates the enzyme, while phosphorylation at Thr-583 activates it. Its function is as follows. Appears to play multiple roles in cell cycle progression, cytokinesis and apoptosis. The p110 isoforms have been suggested to be involved in pre-mRNA splicing, potentially by phosphorylating the splicing protein SFRS7. The p58 isoform may act as a negative regulator of normal cell cycle progression. The protein is Cyclin-dependent kinase 11A (CDK11A) of Homo sapiens (Human).